Consider the following 215-residue polypeptide: Protein FAM27D1 (215 aa).

Residues 74-172 (QPKTHTHTGM…RGTQADLSSR (99 aa)) are disordered. Positions 87–108 (THRERERNTQRLRDRERRENGR) are enriched in basic and acidic residues. Positions 109 to 122 (HTHRHTHTLTHTHT) are enriched in basic residues. 2 stretches are compositionally biased toward basic and acidic residues: residues 123–139 (HRDT…ETHT) and 149–162 (SAHD…REQP). Polar residues predominate over residues 163–172 (RGTQADLSSR).

The protein belongs to the FAM27 family.

The protein is Protein FAM27D1 (FAM27D1) of Homo sapiens (Human).